A 590-amino-acid chain; its full sequence is Ras-specific guanine nucleotide-releasing factor RalGPS2 (590 aa).

Residues 49–287 form the Ras-GEF domain; sequence TPEEYAGQIT…YKLSLKIEPG (239 aa). The disordered stretch occupies residues 288 to 319; the sequence is ASTPRSAASREDLAGPDIGASPQGGRKSSAAA. Phosphoserine is present on residues S293, S296, and S308. The short motif at 331–334 is the PXXP element; sequence PQTP. Phosphothreonine is present on T333. Residues S336 and S350 each carry the phosphoserine modification. T368 is subject to Phosphothreonine. The disordered stretch occupies residues 380-413; sequence DSVMEPHAPSRGQAESSTLSSGISIGSSDGSELS. Residue S381 is modified to Phosphoserine. Residues 394 to 410 are compositionally biased toward low complexity; it reads ESSTLSSGISIGSSDGS. Position 429 is a phosphoserine (S429). In terms of domain architecture, PH spans 464–576; it reads AVTIQGVLRR…WFKHLSAACQ (113 aa). The required for stimulation of nucleotide exchange by RALA stretch occupies residues 466–590; it reads TIQGVLRRKT…QVPTNLMTFE (125 aa).

As to quaternary structure, interacts with RALA. Interacts with the SH3 domains of GRB2 and PLCG1. As to expression, abundant in brain and testis.

The protein localises to the cytoplasm. Its subcellular location is the cell membrane. Functionally, guanine nucleotide exchange factor for the small GTPase RALA. May be involved in cytoskeletal organization. May also be involved in the stimulation of transcription in a Ras-independent fashion. The chain is Ras-specific guanine nucleotide-releasing factor RalGPS2 (Ralgps2) from Mus musculus (Mouse).